The primary structure comprises 39 residues: Non-specific lipid-transfer protein (39 aa).

This sequence belongs to the plant LTP family.

Plant non-specific lipid-transfer proteins transfer phospholipids as well as galactolipids across membranes. May play a role in wax or cutin deposition in the cell walls of expanding epidermal cells and certain secretory tissues. The polypeptide is Non-specific lipid-transfer protein (Musa acuminata (Banana)).